The following is a 35-amino-acid chain: Coenzyme PQQ synthesis protein A (35 aa).

Residues 16–20 constitute a cross-link (pyrroloquinoline quinone (Glu-Tyr)); that stretch reads EINMY.

This sequence belongs to the PqqA family.

The protein operates within cofactor biosynthesis; pyrroloquinoline quinone biosynthesis. Required for coenzyme pyrroloquinoline quinone (PQQ) biosynthesis. PQQ is probably formed by cross-linking a specific glutamate to a specific tyrosine residue and excising these residues from the peptide. This is Coenzyme PQQ synthesis protein A from Ruegeria pomeroyi (strain ATCC 700808 / DSM 15171 / DSS-3) (Silicibacter pomeroyi).